The following is a 159-amino-acid chain: Ribosomal RNA large subunit methyltransferase H (159 aa).

S-adenosyl-L-methionine contacts are provided by residues Leu-76, Gly-107, and 126 to 131; that span reads LSSLTL.

Belongs to the RNA methyltransferase RlmH family. Homodimer.

It is found in the cytoplasm. It carries out the reaction pseudouridine(1915) in 23S rRNA + S-adenosyl-L-methionine = N(3)-methylpseudouridine(1915) in 23S rRNA + S-adenosyl-L-homocysteine + H(+). Functionally, specifically methylates the pseudouridine at position 1915 (m3Psi1915) in 23S rRNA. In Cupriavidus necator (strain ATCC 17699 / DSM 428 / KCTC 22496 / NCIMB 10442 / H16 / Stanier 337) (Ralstonia eutropha), this protein is Ribosomal RNA large subunit methyltransferase H.